We begin with the raw amino-acid sequence, 852 residues long: Glutamine--tRNA ligase (852 aa).

The interval 1 to 42 is disordered; sequence MGAFGWEQDRGAPFSGRSPRILTRMTDAPRPTAGADAPARPP. The interval 1 to 635 is glutaminyl-tRNA synthetase; sequence MGAFGWEQDR…ITLKDTWGKQ (635 aa). A compositionally biased stretch (low complexity) spans 28 to 38; it reads APRPTAGADAP. The short motif at 74 to 84 is the 'HIGH' region element; it reads PDPSGYAHLGH. L-glutamine contacts are provided by Asp-107 and Tyr-252. Residues 308–312 carry the 'KMSKS' region motif; sequence ITSKR. Disordered regions lie at residues 533 to 562 and 632 to 681; these read EGEN…TAPV and WGKQ…LTPE. The segment at 636–852 is gatB-like; the sequence is GGGTQQKAEG…LAAALKDALA (217 aa). Residues 664–675 are compositionally biased toward low complexity; it reads SSSPAKAHAPKA.

In the N-terminal section; belongs to the class-I aminoacyl-tRNA synthetase family. It in the C-terminal section; belongs to the GatB/GatE family. Monomer.

It is found in the cytoplasm. The catalysed reaction is tRNA(Gln) + L-glutamine + ATP = L-glutaminyl-tRNA(Gln) + AMP + diphosphate. This is Glutamine--tRNA ligase from Deinococcus radiodurans (strain ATCC 13939 / DSM 20539 / JCM 16871 / CCUG 27074 / LMG 4051 / NBRC 15346 / NCIMB 9279 / VKM B-1422 / R1).